Reading from the N-terminus, the 169-residue chain is Endoribonuclease YbeY (169 aa).

Residues H126, H130, and H136 each coordinate Zn(2+).

It belongs to the endoribonuclease YbeY family. Zn(2+) is required as a cofactor.

The protein localises to the cytoplasm. In terms of biological role, single strand-specific metallo-endoribonuclease involved in late-stage 70S ribosome quality control and in maturation of the 3' terminus of the 16S rRNA. The polypeptide is Endoribonuclease YbeY (Bradyrhizobium sp. (strain BTAi1 / ATCC BAA-1182)).